Consider the following 189-residue polypeptide: Protein GrpE (189 aa).

Positions 1–37 (MSDSSKEKKKKFADMVSRQKGDDQQSDNHKQTDDLNE) are disordered. Residues 17–33 (SRQKGDDQQSDNHKQTD) are compositionally biased toward basic and acidic residues.

It belongs to the GrpE family. Homodimer.

It is found in the cytoplasm. Functionally, participates actively in the response to hyperosmotic and heat shock by preventing the aggregation of stress-denatured proteins, in association with DnaK and GrpE. It is the nucleotide exchange factor for DnaK and may function as a thermosensor. Unfolded proteins bind initially to DnaJ; upon interaction with the DnaJ-bound protein, DnaK hydrolyzes its bound ATP, resulting in the formation of a stable complex. GrpE releases ADP from DnaK; ATP binding to DnaK triggers the release of the substrate protein, thus completing the reaction cycle. Several rounds of ATP-dependent interactions between DnaJ, DnaK and GrpE are required for fully efficient folding. The protein is Protein GrpE of Wolbachia sp. subsp. Drosophila simulans (strain wRi).